The sequence spans 706 residues: MSENHKLSYVRNIGIGAHIDAGKTTTTERILYYTGVSYSIGEVHDGTTVMDYMKQERDRGITIQSAATTCHWIKKDDCAEQASQKEQEYKINIIDTPGHVDFTIEVGRALRVLDGMIAVFDGVAGVEPQSETVWRQADKYAVPRICFVNKMDRIGADFFRCVQMMKDRLGTKPLVIQLPIGIEDTFKGVIDLVKMKAIVWSNEDLGAKYEYHSIPSNMHAMVEDYRHQLLETVVEVDEEIFNSYVSNEDLSEADIRKCIRKGAISGLFVPVLCGSAFKNKGVQTLLDAVVDYLPSPNDVNSIKAVDVKTEQEISRKVSVDEQFSALAFKVINDPFVGSLTFIRIYSGKLQTGSTVINTTKNQKERISRMLLMHANNRKDIKEAVAGDIVALTGLKSTTTGDTICSLDSQIILEKIEFPKPVIELAVEPKTPADQEKISAALVKLAAEDPSLVFTVDSETNQMVIKGMGELHLEIIIDRMKEEFKVEANVGAPRVAYRETITQSYTVDYTHKKQTGGAGQFARVKIIFEPLEVGAGFQFESKIVGGAIPKEFIPGVEKGLEEIKESGVVAGYPTIDFKATLIDGSFHEVDSSVLAFEIAAKNAFKEGITKAGPKLLGPIMKVEVISPNEYMGDIIGDLNSRSGVIQSMEPRGNTQIINAYVPLGQMFGYVSTLRSLSQGRAQYSMVFSHYEQVSRSIAEKIQAKDKK.

The region spanning 8-297 is the tr-type G domain; the sequence is SYVRNIGIGA…AVVDYLPSPN (290 aa). Residues 17 to 24, 95 to 99, and 149 to 152 contribute to the GTP site; these read AHIDAGKT, DTPGH, and NKMD.

This sequence belongs to the TRAFAC class translation factor GTPase superfamily. Classic translation factor GTPase family. EF-G/EF-2 subfamily.

The protein resides in the cytoplasm. Catalyzes the GTP-dependent ribosomal translocation step during translation elongation. During this step, the ribosome changes from the pre-translocational (PRE) to the post-translocational (POST) state as the newly formed A-site-bound peptidyl-tRNA and P-site-bound deacylated tRNA move to the P and E sites, respectively. Catalyzes the coordinated movement of the two tRNA molecules, the mRNA and conformational changes in the ribosome. In Orientia tsutsugamushi (strain Boryong) (Rickettsia tsutsugamushi), this protein is Elongation factor G.